The primary structure comprises 74 residues: Mitochondrial import receptor subunit TOM6 homolog (74 aa).

Residues 1 to 16 show a composition bias toward polar residues; it reads MASSTVPVSAAGSANE. A disordered region spans residues 1 to 22; the sequence is MASSTVPVSAAGSANETPEIPD. Ala2 is modified (N-acetylalanine).

This sequence belongs to the Tom6 family. Forms part of the preprotein translocase complex of the outer mitochondrial membrane (TOM complex) which consists of at least 7 different proteins (TOMM5, TOMM6, TOMM7, TOMM20, TOMM22, TOMM40 and TOMM70).

It localises to the mitochondrion outer membrane. The protein is Mitochondrial import receptor subunit TOM6 homolog (TOMM6) of Homo sapiens (Human).